The following is a 173-amino-acid chain: Crossover junction endodeoxyribonuclease RuvC (173 aa).

Active-site residues include aspartate 8, glutamate 67, and aspartate 139. Mg(2+) is bound by residues aspartate 8, glutamate 67, and aspartate 139.

Belongs to the RuvC family. As to quaternary structure, homodimer which binds Holliday junction (HJ) DNA. The HJ becomes 2-fold symmetrical on binding to RuvC with unstacked arms; it has a different conformation from HJ DNA in complex with RuvA. In the full resolvosome a probable DNA-RuvA(4)-RuvB(12)-RuvC(2) complex forms which resolves the HJ. Mg(2+) is required as a cofactor.

The protein localises to the cytoplasm. The catalysed reaction is Endonucleolytic cleavage at a junction such as a reciprocal single-stranded crossover between two homologous DNA duplexes (Holliday junction).. In terms of biological role, the RuvA-RuvB-RuvC complex processes Holliday junction (HJ) DNA during genetic recombination and DNA repair. Endonuclease that resolves HJ intermediates. Cleaves cruciform DNA by making single-stranded nicks across the HJ at symmetrical positions within the homologous arms, yielding a 5'-phosphate and a 3'-hydroxyl group; requires a central core of homology in the junction. The consensus cleavage sequence is 5'-(A/T)TT(C/G)-3'. Cleavage occurs on the 3'-side of the TT dinucleotide at the point of strand exchange. HJ branch migration catalyzed by RuvA-RuvB allows RuvC to scan DNA until it finds its consensus sequence, where it cleaves and resolves the cruciform DNA. This chain is Crossover junction endodeoxyribonuclease RuvC, found in Klebsiella pneumoniae (strain 342).